Here is a 408-residue protein sequence, read N- to C-terminus: Protein ZNF365 (408 aa).

At S16 the chain carries Phosphoserine. Residues 26–51 form a C2H2-type; degenerate zinc finger; that stretch reads FRCPRCGDHTRFRSLSSLRAHLEFSH. Phosphoserine is present on residues S139 and S146. A coiled-coil region spans residues 170–298; that stretch reads VEAVDRTIEK…QLEYYQSQQA (129 aa). T176 is subject to Phosphothreonine. Position 370 is a phosphoserine (S370).

Homodimer. Interacts with NDE1 and NDEL1. Interacts with DISC1. Interacts with PARP1. Interacts with MCRS1. Detected in several tissues, with highest levels in brain. Also expressed during embryonic development. Expressed in cerebral cortex, hippocampus, striatum, inferior colliculus and thalamus.

The protein localises to the cytoplasm. Its subcellular location is the cytoskeleton. It localises to the microtubule organizing center. It is found in the centrosome. In terms of biological role, contributes to genomic stability by preventing telomere dysfunction. Involved in the morphogenesis of basket cells in the somatosensory cortex during embryogenesis. Involved in the positive regulation of oligodendrocyte differentiation during postnatal growth. Involved in dendritic arborization, morphogenesis of spine density dendrite, and establishment of postsynaptic dendrite density in cortical pyramidal neurons. Involved in the regulation of neurogenesis. Negatively regulates neurite outgrowth. Involved in homologous recombination (HR) repair pathway. Required for proper resolution of DNA double-strand breaks (DSBs) by HR. Is required for recovery of stalled replication forks, and directly contributes to genomic stability. Interacts with PARP1 and mediates MRE11-dependent DNA end resection during replication fork recovery. The polypeptide is Protein ZNF365 (Znf365) (Mus musculus (Mouse)).